A 180-amino-acid chain; its full sequence is Adenine phosphoribosyltransferase (180 aa).

The protein belongs to the purine/pyrimidine phosphoribosyltransferase family. Homodimer.

The protein localises to the cytoplasm. The catalysed reaction is AMP + diphosphate = 5-phospho-alpha-D-ribose 1-diphosphate + adenine. It participates in purine metabolism; AMP biosynthesis via salvage pathway; AMP from adenine: step 1/1. Catalyzes a salvage reaction resulting in the formation of AMP, that is energically less costly than de novo synthesis. In Rhizobium meliloti (strain 1021) (Ensifer meliloti), this protein is Adenine phosphoribosyltransferase.